The sequence spans 511 residues: Probable cytochrome P450 4ac2 (511 aa).

Heme is bound by residues Glu-318 and Cys-455.

The protein belongs to the cytochrome P450 family. The cofactor is heme.

The protein localises to the endoplasmic reticulum membrane. It is found in the microsome membrane. Functionally, may be involved in the metabolism of insect hormones and in the breakdown of synthetic insecticides. The protein is Probable cytochrome P450 4ac2 (Cyp4ac2) of Drosophila melanogaster (Fruit fly).